A 475-amino-acid chain; its full sequence is Splicing factor U2AF 65 kDa subunit (475 aa).

The interval 1–90 (MSDFDEFERQ…RHEKKKKVRK (90 aa)) is disordered. An N-acetylserine modification is found at serine 2. Serine 2 carries the phosphoserine modification. The interval 2 to 93 (SDFDEFERQL…KKKKVRKYWD (92 aa)) is required for interaction with PRPF19. The span at 7 to 22 (FERQLNENKQERDKEN) shows a compositional bias: basic and acidic residues. Lysine 15 carries the post-translational modification 5-hydroxylysine; by JMJD6; alternate. Lysine 15 participates in a covalent cross-link: Glycyl lysine isopeptide (Lys-Gly) (interchain with G-Cter in SUMO2); alternate. Residues 17 to 47 (ERDKENRHRKRSHSRSRSRDRKRRSRSRDRR) form a necessary and sufficient to stimulate pre-mRNAs 3'-end cleavage in a CFIm complex-dependent manner region. Basic residues predominate over residues 23–46 (RHRKRSHSRSRSRDRKRRSRSRDR). Basic and acidic residues predominate over residues 47–56 (RNRDQRSASR). Lysine 70 is covalently cross-linked (Glycyl lysine isopeptide (Lys-Gly) (interchain with G-Cter in SUMO2); alternate). Residue lysine 70 is modified to N6-acetyllysine; alternate. Phosphoserine is present on serine 79. The span at 79–89 (SPRHEKKKKVR) shows a compositional bias: basic residues. 3 consecutive RRM domains span residues 149–231 (RRLY…RPHD), 259–337 (HKLF…RASV), and 385–466 (LPEE…YCDP). Lysine 276 is modified (5-hydroxylysine; by JMJD6). Serine 294 is modified (phosphoserine).

This sequence belongs to the splicing factor SR family. In terms of assembly, interacts with U2AF1L4. Heterodimer with U2AF1. Binds unphosphorylated SF1. Interacts with SCAF11 and SNW1. Interacts with ZRSR2/U2AF1-RS2. Interacts with RBM17. Interacts with PRPF19; the interaction is direct. Interacts with POLR2A (via the C-terminal domain); Interacts with PRPF19; the interaction is direct. Interacts with POLR2A (via the C-terminal domain); recruits PRPF19 and the Prp19 complex to the pre-mRNA. Interacts with KHDC4 (Isoform 2). Interacts with ZRSR2. Interacts with the SF3B complex composed of SF3B1, SF3B2, SF3B3, SF3B4, SF3B5, SF3B6 and PHF5A. Interacts (via N-terminus) with CPSF7 (via C-terminus); this interaction stimulates pre-mRNA 3'-end processing by promoting the recruitment of the CFIm complex to cleavage and polyadenylation signals. Interacts with ARGLU1; interaction may be involved in ARGLU1-mediated modulation of alternative splicing. Post-translationally, lysyl-hydroxylation at Lys-15 and Lys-276 affects the mRNA splicing activity of the protein, leading to regulate some, but not all, alternative splicing events.

The protein resides in the nucleus. Plays a role in pre-mRNA splicing and 3'-end processing. By recruiting PRPF19 and the PRP19C/Prp19 complex/NTC/Nineteen complex to the RNA polymerase II C-terminal domain (CTD), and thereby pre-mRNA, may couple transcription to splicing. Required for the export of mRNA out of the nucleus, even if the mRNA is encoded by an intron-less gene. Positively regulates pre-mRNA 3'-end processing by recruiting the CFIm complex to cleavage and polyadenylation signals. This is Splicing factor U2AF 65 kDa subunit (U2af2) from Mus musculus (Mouse).